The primary structure comprises 203 residues: Guanylate kinase (203 aa).

Residues 3–181 (GTLYIVAAPS…AVAEMCAIFT (179 aa)) enclose the Guanylate kinase-like domain. 10 to 17 (APSGAGKS) contributes to the ATP binding site.

Belongs to the guanylate kinase family.

The protein resides in the cytoplasm. It carries out the reaction GMP + ATP = GDP + ADP. In terms of biological role, essential for recycling GMP and indirectly, cGMP. The polypeptide is Guanylate kinase (Xanthomonas euvesicatoria pv. vesicatoria (strain 85-10) (Xanthomonas campestris pv. vesicatoria)).